Reading from the N-terminus, the 256-residue chain is Chalcone--flavanone isomerase (256 aa).

Residues Thr51, Asn116, and Ser193 each contribute to the substrate site. Positions 219-256 (NSTTDLNESENEKLNSNEVSKEEKPLQVEKSAFKEVEV) are disordered. Positions 228–256 (ENEKLNSNEVSKEEKPLQVEKSAFKEVEV) are enriched in basic and acidic residues.

It belongs to the chalcone isomerase family. Nodules.

It carries out the reaction a chalcone = a flavanone.. It functions in the pathway secondary metabolite biosynthesis; flavonoid biosynthesis. Catalyzes the intramolecular cyclization of bicyclic chalcones into tricyclic (S)-flavanones. Responsible for the isomerization of 4,2',4',6'-tetrahydroxychalcone (also termed chalcone) into naringenin. The chain is Chalcone--flavanone isomerase (CHI) from Elaeagnus umbellata (Autumn olive).